A 120-amino-acid polypeptide reads, in one-letter code: Small ribosomal subunit protein bS16 (120 aa).

Positions 81–120 are disordered; the sequence is GLAKRPARNNPQKAEPGEKSKERAAKRAEKAAAPAEDAAA. Residues 95 to 110 are compositionally biased toward basic and acidic residues; it reads EPGEKSKERAAKRAEK. The span at 111–120 shows a compositional bias: low complexity; that stretch reads AAAPAEDAAA.

It belongs to the bacterial ribosomal protein bS16 family.

This is Small ribosomal subunit protein bS16 from Methylorubrum populi (strain ATCC BAA-705 / NCIMB 13946 / BJ001) (Methylobacterium populi).